A 142-amino-acid chain; its full sequence is MAESVIEKCTEQVSNRFKLALLASQRTHDLNTGASNPVQSARFKGHKNTIISLYEIAERQVDTHELFSLLVSRCKEYMKGNLSNTYSSNTSKLEKLLNFSNDQFNTDADVDQESTDIQDDEVENEMSNQDSEDIDDEVDNEE.

Residues 104 to 142 are disordered; it reads FNTDADVDQESTDIQDDEVENEMSNQDSEDIDDEVDNEE. The segment covering 108–142 has biased composition (acidic residues); sequence ADVDQESTDIQDDEVENEMSNQDSEDIDDEVDNEE.

It belongs to the RNA polymerase subunit omega family. The RNAP catalytic core consists of 2 alpha, 1 beta, 1 beta' and 1 omega subunit. When a sigma factor is associated with the core the holoenzyme is formed, which can initiate transcription.

It carries out the reaction RNA(n) + a ribonucleoside 5'-triphosphate = RNA(n+1) + diphosphate. Its function is as follows. Promotes RNA polymerase assembly. Latches the N- and C-terminal regions of the beta' subunit thereby facilitating its interaction with the beta and alpha subunits. This Wolbachia sp. subsp. Brugia malayi (strain TRS) protein is DNA-directed RNA polymerase subunit omega.